An 891-amino-acid chain; its full sequence is Bifunctional aldehyde-alcohol dehydrogenase AdhE (891 aa).

The tract at residues Ala2 to Asn440 is aldehyde dehydrogenase. NAD(+) contacts are provided by residues Ile110–Asn115, Gly195, and Gly213. Cys246 serves as the catalytic Nucleophile. Residues Glu335 and Leu419 each contribute to the NAD(+) site. Residues Lys441–Ala448 form a linker region. Residues Glu449–Ala891 are alcohol dehydrogenase. NAD(+) is bound by residues Asp487, Asp519, Gly546–Asp550, Thr597–Thr598, Val610, Lys619, and Leu638. 4 residues coordinate Fe cation: Asp653, His657, His723, and His737.

This sequence in the N-terminal section; belongs to the aldehyde dehydrogenase family. The protein in the C-terminal section; belongs to the iron-containing alcohol dehydrogenase family. Forms long filaments, called spirosomes. Fe(2+) is required as a cofactor.

The catalysed reaction is acetaldehyde + NAD(+) + CoA = acetyl-CoA + NADH + H(+). The enzyme catalyses ethanol + NAD(+) = acetaldehyde + NADH + H(+). It carries out the reaction a primary alcohol + NAD(+) = an aldehyde + NADH + H(+). Under fermentative conditions, catalyzes the sequential NADH-dependent reduction of acetyl-CoA to acetaldehyde and then to ethanol. Plays an important role in virulence and is critical for proper regulation of virulence gene expression. This Escherichia coli O157:H7 protein is Bifunctional aldehyde-alcohol dehydrogenase AdhE.